Reading from the N-terminus, the 244-residue chain is GTP cyclohydrolase 1 type 2 homolog (244 aa).

Residues His-65, His-66, Asp-102, His-216, and Glu-220 each contribute to the a divalent metal cation site.

This sequence belongs to the GTP cyclohydrolase I type 2/NIF3 family. In terms of assembly, homohexamer; trimer of dimers, that forms a hollow cage-like architecture.

Its function is as follows. DNA-binding protein exhibiting the ability to bind to both single-stranded and double-stranded DNA. The chain is GTP cyclohydrolase 1 type 2 homolog from Methanocaldococcus jannaschii (strain ATCC 43067 / DSM 2661 / JAL-1 / JCM 10045 / NBRC 100440) (Methanococcus jannaschii).